Reading from the N-terminus, the 162-residue chain is Protein cornichon homolog 2 (162 aa).

The Cytoplasmic portion of the chain corresponds to 1–10; the sequence is MAFTFAAFCY. Residues 11-31 form a helical membrane-spanning segment; that stretch reads MLTLVLCASLIFFIIWHIIAF. Over 32 to 72 the chain is Lumenal; it reads DDLRTDFKDPIEQGNPSRARERIKNVERVCCLLRKLVVPEY. A helical membrane pass occupies residues 73-93; sequence CIHGLFCLMFMCAAEWVTLGL. The Cytoplasmic portion of the chain corresponds to 94 to 138; the sequence is NIPLLFYHLWRYFHRPADGSEVMFDPVSIMNVDILNYCQKEAWCK. The helical transmembrane segment at 139-161 threads the bilayer; sequence LAFYLLSFFYYLYRVGATVRYVS. Position 162 (Ala-162) is a topological domain, lumenal.

It belongs to the cornichon family.

Its subcellular location is the membrane. Functionally, regulates the trafficking and gating properties of AMPA-selective glutamate receptors (AMPARs). In Xenopus laevis (African clawed frog), this protein is Protein cornichon homolog 2 (cnih2).